Here is a 520-residue protein sequence, read N- to C-terminus: Nucleobase-ascorbate transporter 1 (520 aa).

The next 12 membrane-spanning stretches (helical) occupy residues Y36–G56, V64–T84, L86–D106, A129–F149, S150–F170, F174–L194, F213–G233, F279–A299, G362–V382, I384–L404, L415–Y435, and A453–M473.

It belongs to the nucleobase:cation symporter-2 (NCS2) (TC 2.A.40) family. As to expression, expressed in cotyledons 4 days after imbibition (DAI). Expressed in the minor and major veins of cotyledons and leaves, in the shoot apex and pedicels. Expressed in the root meristems, root tips and lateral root primordia.

It localises to the membrane. The sequence is that of Nucleobase-ascorbate transporter 1 (NAT1) from Arabidopsis thaliana (Mouse-ear cress).